Here is a 398-residue protein sequence, read N- to C-terminus: Elongation factor Tu (398 aa).

A tr-type G domain is found at K10–E207. The tract at residues G19–T26 is G1. Residue G19–T26 coordinates GTP. T26 is a binding site for Mg(2+). A G2 region spans residues G63–N67. The interval D84 to G87 is G3. Residues D84 to H88 and N139 to D142 contribute to the GTP site. Residues N139–D142 are G4. A G5 region spans residues S177–L179.

Belongs to the TRAFAC class translation factor GTPase superfamily. Classic translation factor GTPase family. EF-Tu/EF-1A subfamily. In terms of assembly, monomer.

Its subcellular location is the cytoplasm. The catalysed reaction is GTP + H2O = GDP + phosphate + H(+). GTP hydrolase that promotes the GTP-dependent binding of aminoacyl-tRNA to the A-site of ribosomes during protein biosynthesis. This is Elongation factor Tu from Streptococcus suis (strain 98HAH33).